The following is a 571-amino-acid chain: Proline--tRNA ligase (571 aa).

The protein belongs to the class-II aminoacyl-tRNA synthetase family. ProS type 1 subfamily. In terms of assembly, homodimer.

Its subcellular location is the cytoplasm. The catalysed reaction is tRNA(Pro) + L-proline + ATP = L-prolyl-tRNA(Pro) + AMP + diphosphate. Functionally, catalyzes the attachment of proline to tRNA(Pro) in a two-step reaction: proline is first activated by ATP to form Pro-AMP and then transferred to the acceptor end of tRNA(Pro). As ProRS can inadvertently accommodate and process non-cognate amino acids such as alanine and cysteine, to avoid such errors it has two additional distinct editing activities against alanine. One activity is designated as 'pretransfer' editing and involves the tRNA(Pro)-independent hydrolysis of activated Ala-AMP. The other activity is designated 'posttransfer' editing and involves deacylation of mischarged Ala-tRNA(Pro). The misacylated Cys-tRNA(Pro) is not edited by ProRS. In Pseudomonas putida (strain ATCC 700007 / DSM 6899 / JCM 31910 / BCRC 17059 / LMG 24140 / F1), this protein is Proline--tRNA ligase.